We begin with the raw amino-acid sequence, 222 residues long: Protein DEHYDRATION-INDUCED 19 homolog 6 (222 aa).

At Ser-116 the chain carries Phosphoserine.

This sequence belongs to the Di19 family. Phosphorylated in vitro by CPK3 or CPK11. In terms of tissue distribution, expressed in seedlings, roots, leaves, stems, flowers and siliques.

The protein localises to the nucleus. The chain is Protein DEHYDRATION-INDUCED 19 homolog 6 (DI19-6) from Arabidopsis thaliana (Mouse-ear cress).